Consider the following 337-residue polypeptide: Phosphate acyltransferase (337 aa).

The protein belongs to the PlsX family. Homodimer. Probably interacts with PlsY.

It localises to the cytoplasm. It catalyses the reaction a fatty acyl-[ACP] + phosphate = an acyl phosphate + holo-[ACP]. It functions in the pathway lipid metabolism; phospholipid metabolism. Its function is as follows. Catalyzes the reversible formation of acyl-phosphate (acyl-PO(4)) from acyl-[acyl-carrier-protein] (acyl-ACP). This enzyme utilizes acyl-ACP as fatty acyl donor, but not acyl-CoA. The protein is Phosphate acyltransferase of Ehrlichia chaffeensis (strain ATCC CRL-10679 / Arkansas).